A 457-amino-acid polypeptide reads, in one-letter code: Flavohemoprotein-1 (457 aa).

In terms of domain architecture, Globin spans 2–157 (ALSEDTIKAV…LADLLIKREE (156 aa)). H106 provides a ligand contact to heme b. Active-site charge relay system residues include Y116 and E156. The interval 168 to 456 (GGWRQTRTFR…FEMFGPFKAS (289 aa)) is reductase. One can recognise an FAD-binding FR-type domain in the interval 171–278 (RQTRTFRVEE…APPYGDFFLR (108 aa)). FAD contacts are provided by residues Y210 and 227-230 (RQYS). 320–325 (GIGQTP) is an NADP(+) binding site. 449-452 (MFGP) contacts FAD.

Belongs to the globin family. Two-domain flavohemoproteins subfamily. This sequence in the C-terminal section; belongs to the flavoprotein pyridine nucleotide cytochrome reductase family. In terms of assembly, monomer. It depends on heme b as a cofactor. FAD is required as a cofactor.

It carries out the reaction 2 nitric oxide + NADPH + 2 O2 = 2 nitrate + NADP(+) + H(+). It catalyses the reaction 2 nitric oxide + NADH + 2 O2 = 2 nitrate + NAD(+) + H(+). In terms of biological role, flavohemoprotein involved in nitric oxide (NO) detoxification in an aerobic process, termed nitric oxide dioxygenase (NOD) reaction that utilizes O(2) and NAD(P)H to convert NO to nitrate, which protects the protozoan parasite from various noxious nitrogen compounds. Therefore, plays a central role in the inducible response to nitrosative stress. May also be involved in O(2) detoxification. This chain is Flavohemoprotein-1 (hmpA-1), found in Giardia intestinalis (strain P15) (Giardia lamblia).